We begin with the raw amino-acid sequence, 183 residues long: Ribosome rescue factor SmrB (183 aa).

Residues Leu-98–Glu-173 form the Smr domain.

It belongs to the SmrB family. As to quaternary structure, associates with collided ribosomes, but not with correctly translating polysomes.

In terms of biological role, acts as a ribosome collision sensor. Detects stalled/collided disomes (pairs of ribosomes where the leading ribosome is stalled and a second ribosome has collided with it) and endonucleolytically cleaves mRNA at the 5' boundary of the stalled ribosome. Stalled/collided disomes form a new interface (primarily via the 30S subunits) that binds SmrB. Cleaved mRNA becomes available for tmRNA ligation, leading to ribosomal subunit dissociation and rescue of stalled ribosomes. The polypeptide is Ribosome rescue factor SmrB (Escherichia coli O17:K52:H18 (strain UMN026 / ExPEC)).